The sequence spans 423 residues: MQYKDENGVNEPSRRRLLKVIGALALAGSCPVAHAQKTQSAPGTLSPDARNEKQPFYGEHQAGILTPQQAAMMLVAFDVLASDKADLERLFRLLTQRFAFLTQGGAAPETPNPRLPPLDSGILGGYIAPDNLTITLSVGHSLFDERFGLAPQMPKKLQKMTRFPNDSLDAALCHGDVLLQICANTQDTVIHALRDIIKHTPDLLSVRWKREGFISDHAARSKGKETPINLLGFKDGTANPDSQNDKLMQKVVWVTADQQEPAWTIGGSYQAVRLIQFRVEFWDRTPLKEQQTIFGRDKQTGAPLGMQHEHDVPDYASDPEGKVIALDSHIRLANPRTAESESSLMLRRGYSYSLGVTNSGQLDMGLLFVCYQHDLEKGFLTVQKRLNGEALEEYVKPIGGGYFFSLPGVKDANDYLGSALLRV.

A signal peptide (tat-type signal) is located at residues 1–35 (MQYKDENGVNEPSRRRLLKVIGALALAGSCPVAHA). Heme b is bound by residues 236–238 (GTA), H329, 334–336 (NPR), and R347.

The protein belongs to the DyP-type peroxidase family. EfeB subfamily. Homodimer. Part of a ferrous iron transporter composed of EfeU, EfeO and EfeB. Heme b serves as cofactor. Post-translationally, predicted to be exported by the Tat system. The position of the signal peptide cleavage has not been experimentally proven.

The protein localises to the periplasm. It catalyses the reaction heme b + 2 H(+) = protoporphyrin IX + Fe(2+). Involved in the recovery of exogenous heme iron. Extracts iron from heme while preserving the protoporphyrin ring intact. The polypeptide is Deferrochelatase (efeB) (Shigella boydii serotype 4 (strain Sb227)).